A 1016-amino-acid polypeptide reads, in one-letter code: Probable outer membrane protein PmpH (1016 aa).

An N-terminal signal peptide occupies residues 1–24; sequence MPFSLRSTSFCFLACLCSYSYGFA. Residues 697–1016 enclose the Autotransporter domain; the sequence is GELVPNSLWV…FVSMGLNRIF (320 aa).

This sequence belongs to the PMP outer membrane protein family.

The protein localises to the secreted. It is found in the cell wall. The protein resides in the cell outer membrane. The protein is Probable outer membrane protein PmpH (pmpH) of Chlamydia trachomatis serovar D (strain ATCC VR-885 / DSM 19411 / UW-3/Cx).